The chain runs to 202 residues: Small ribosomal subunit protein bS20c (202 aa).

The transit peptide at 1–79 (MATIVQCLSS…KPMRQLIVCE (79 aa)) directs the protein to the chloroplast. The disordered stretch occupies residues 89-110 (SAAKRARQAEKRRVYNKSKKSE).

It belongs to the bacterial ribosomal protein bS20 family. In terms of assembly, part of the 30S ribosomal subunit.

The protein resides in the plastid. Its subcellular location is the chloroplast. Binds directly to 16S ribosomal RNA. The chain is Small ribosomal subunit protein bS20c (RPS20) from Arabidopsis thaliana (Mouse-ear cress).